We begin with the raw amino-acid sequence, 288 residues long: ATP synthase gamma chain (288 aa).

This sequence belongs to the ATPase gamma chain family. In terms of assembly, F-type ATPases have 2 components, CF(1) - the catalytic core - and CF(0) - the membrane proton channel. CF(1) has five subunits: alpha(3), beta(3), gamma(1), delta(1), epsilon(1). CF(0) has three main subunits: a, b and c.

It is found in the cell inner membrane. Its function is as follows. Produces ATP from ADP in the presence of a proton gradient across the membrane. The gamma chain is believed to be important in regulating ATPase activity and the flow of protons through the CF(0) complex. The polypeptide is ATP synthase gamma chain (Vesicomyosocius okutanii subsp. Calyptogena okutanii (strain HA)).